Reading from the N-terminus, the 250-residue chain is PF03932 family protein CutC (250 aa).

Belongs to the CutC family.

Its subcellular location is the cytoplasm. This chain is PF03932 family protein CutC, found in Proteus mirabilis (strain HI4320).